The primary structure comprises 419 residues: Tyrosine--tRNA ligase (419 aa).

Position 42 (Y42) interacts with L-tyrosine. Residues 47–56 (CTAPSLHVGS) carry the 'HIGH' region motif. Residues Y179 and Q183 each contribute to the L-tyrosine site. The 'KMSKS' region signature appears at 239–243 (KMGKT). K242 is a binding site for ATP. An S4 RNA-binding domain is found at 353 to 419 (LGVLAAFVKA…RKRHVLLKLV (67 aa)).

This sequence belongs to the class-I aminoacyl-tRNA synthetase family. TyrS type 1 subfamily. In terms of assembly, homodimer.

The protein localises to the cytoplasm. It carries out the reaction tRNA(Tyr) + L-tyrosine + ATP = L-tyrosyl-tRNA(Tyr) + AMP + diphosphate + H(+). Functionally, catalyzes the attachment of tyrosine to tRNA(Tyr) in a two-step reaction: tyrosine is first activated by ATP to form Tyr-AMP and then transferred to the acceptor end of tRNA(Tyr). This chain is Tyrosine--tRNA ligase, found in Methylocella silvestris (strain DSM 15510 / CIP 108128 / LMG 27833 / NCIMB 13906 / BL2).